A 129-amino-acid chain; its full sequence is MPTVEYLNYEVVDDNGWDMYDDDVFGEASDMDLDDEDYGSLEVNEGEYILEAAEAQGYDWPFSCRAGACANCAAIVLEGDIDMDMQQILSDEEVEDKNVRLTCIGSPDADEVKIVYNAKHLDYLQNRVI.

One can recognise a 2Fe-2S ferredoxin-type domain in the interval 29 to 120; that stretch reads SDMDLDDEDY…EVKIVYNAKH (92 aa). Cys64, Cys69, Cys72, and Cys103 together coordinate [2Fe-2S] cluster.

Belongs to the 2Fe2S plant-type ferredoxin family. It depends on [2Fe-2S] cluster as a cofactor.

Its function is as follows. Ferredoxins are iron-sulfur proteins that transfer electrons in a wide variety of metabolic reactions. The polypeptide is Ferredoxin-1 (fer1) (Haloarcula marismortui (strain ATCC 43049 / DSM 3752 / JCM 8966 / VKM B-1809) (Halobacterium marismortui)).